A 208-amino-acid chain; its full sequence is GTP-binding protein YPTM1 (208 aa).

GTP-binding positions include 15-23, 33-40, 63-67, 121-124, and 151-153; these read GDSSVGKSC, YVDSYIST, DTAGQ, NKCD, and SAK. The Effector region motif lies at 37 to 45; that stretch reads YISTIGVDF. The tract at residues 189-208 is disordered; sequence QMKGRPIQQEQQKSSRCCST. Over residues 196 to 208 the composition is skewed to polar residues; it reads QQEQQKSSRCCST. S-geranylgeranyl cysteine attachment occurs at residues Cys-205 and Cys-206.

It belongs to the small GTPase superfamily. Rab family. Low levels in coleoptiles.

Its subcellular location is the cell membrane. Functionally, protein transport. Probably involved in vesicular traffic. The protein is GTP-binding protein YPTM1 (YPTM1) of Zea mays (Maize).